The chain runs to 476 residues: Ribulose bisphosphate carboxylase large chain (476 aa).

A propeptide spanning residues methionine 1–serine 2 is cleaved from the precursor. An N-acetylproline modification is found at proline 3. Lysine 14 is subject to N6,N6,N6-trimethyllysine. Substrate contacts are provided by asparagine 123 and threonine 173. Lysine 175 functions as the Proton acceptor in the catalytic mechanism. Lysine 177 is a binding site for substrate. Residues lysine 201, aspartate 203, and glutamate 204 each contribute to the Mg(2+) site. The residue at position 201 (lysine 201) is an N6-carboxylysine. Residues arginine 295, histidine 327, and serine 379 each contribute to the substrate site.

Belongs to the RuBisCO large chain family. Type I subfamily. As to quaternary structure, heterohexadecamer of 8 large chains and 8 small chains; disulfide-linked. The disulfide link is formed within the large subunit homodimers. Requires Mg(2+) as cofactor. The disulfide bond which can form in the large chain dimeric partners within the hexadecamer appears to be associated with oxidative stress and protein turnover.

It localises to the plastid. The protein resides in the chloroplast. It catalyses the reaction 2 (2R)-3-phosphoglycerate + 2 H(+) = D-ribulose 1,5-bisphosphate + CO2 + H2O. The catalysed reaction is D-ribulose 1,5-bisphosphate + O2 = 2-phosphoglycolate + (2R)-3-phosphoglycerate + 2 H(+). Its function is as follows. RuBisCO catalyzes two reactions: the carboxylation of D-ribulose 1,5-bisphosphate, the primary event in carbon dioxide fixation, as well as the oxidative fragmentation of the pentose substrate in the photorespiration process. Both reactions occur simultaneously and in competition at the same active site. This chain is Ribulose bisphosphate carboxylase large chain, found in Barnadesia caryophylla (Xenophontia caryophylla).